The following is a 638-amino-acid chain: Probable beta-glucosidase C (638 aa).

The first 18 residues, 1–18, serve as a signal peptide directing secretion; that stretch reads MKVLAPGYLAEASLTALA. N-linked (GlcNAc...) asparagine glycosylation is found at N40, N94, N116, N223, and N274. D341 is a catalytic residue. 4 N-linked (GlcNAc...) asparagine glycosylation sites follow: N364, N480, N488, and N528.

Belongs to the glycosyl hydrolase 3 family.

Its subcellular location is the secreted. The enzyme catalyses Hydrolysis of terminal, non-reducing beta-D-glucosyl residues with release of beta-D-glucose.. Its pathway is glycan metabolism; cellulose degradation. Its function is as follows. Beta-glucosidases are one of a number of cellulolytic enzymes involved in the degradation of cellulosic biomass. Catalyzes the last step releasing glucose from the inhibitory cellobiose. The sequence is that of Probable beta-glucosidase C (bglC) from Aspergillus oryzae (strain ATCC 42149 / RIB 40) (Yellow koji mold).